The following is a 391-amino-acid chain: B2 bradykinin receptor (391 aa).

Residues 1-60 are Extracellular-facing; the sequence is MFSPWKISMFLSVREDSVPTTASFSADMLNVTLQGPTLNGTFAQSKCPQVEWLGWLNTIQ. 2 N-linked (GlcNAc...) asparagine glycosylation sites follow: Asn-30 and Asn-39. The chain crosses the membrane as a helical span at residues 61–84; that stretch reads PPFLWVLFVLATLENIFVLSVFCL. Residues 85-93 are Cytoplasmic-facing; that stretch reads HKSSCTVAE. The chain crosses the membrane as a helical span at residues 94–118; sequence IYLGNLAAADLILACGLPFWAITIS. Topologically, residues 119–131 are extracellular; sequence NNFDWLFGETLCR. A disulfide bridge links Cys-130 with Cys-211. The helical transmembrane segment at 132–153 threads the bilayer; the sequence is VVNAIISMNLYSSICFLMLVSI. The Cytoplasmic portion of the chain corresponds to 154–175; the sequence is DRYLALVKTMSMGRMRGVRWAK. Residue Tyr-156 is modified to Phosphotyrosine. A helical transmembrane segment spans residues 176–198; that stretch reads LYSLVIWGCTLLLSSPMLVFRTM. The Extracellular portion of the chain corresponds to 199–221; sequence KEYSDEGHNVTACVISYPSLIWE. Asn-207 is a glycosylation site (N-linked (GlcNAc...) asparagine). Residues 222–248 traverse the membrane as a helical segment; it reads VFTNMLLNVVGFLLPLSVITFCTMQIM. Over 249–267 the chain is Cytoplasmic; sequence QVLRNNEMQKFKEIQTERR. Residues 268–292 form a helical membrane-spanning segment; that stretch reads ATVLVLVVLLLFIICWLPFQISTFL. Topologically, residues 293-311 are extracellular; it reads DTLHRLGILSSCQDERIID. A helical transmembrane segment spans residues 312–335; it reads VITQIASFMAYSNSCLNPLVYVIV. The Cytoplasmic portion of the chain corresponds to 336–391; the sequence is GKRFRKKSWEVYQGVCQKGGCRSEPIQMENSMGTLRTSISVERQIHKLQDWAGSRQ. Phosphotyrosine is present on Tyr-347. Residue Cys-351 is the site of S-palmitoyl cysteine attachment. Ser-366 carries the post-translational modification Phosphoserine. Thr-369 bears the Phosphothreonine mark. Phosphoserine; by GRK6 occurs at positions 373 and 375.

Belongs to the G-protein coupled receptor 1 family. Bradykinin receptor subfamily. BDKRB2 sub-subfamily. Forms a complex with PECAM1 and GNAQ. Interacts with PECAM1. Ubiquitous. Widespread in normal smooth muscle tissue and neurons.

The protein localises to the cell membrane. Functionally, receptor for bradykinin. It is associated with G proteins that activate a phosphatidylinositol-calcium second messenger system. The chain is B2 bradykinin receptor (BDKRB2) from Homo sapiens (Human).